Consider the following 311-residue polypeptide: Glycine-betaine-binding protein (311 aa).

Residues 1–23 (MNRLIRSLCLACAGLFAAGLAQA) form the signal peptide.

It belongs to the OsmX family.

It is found in the periplasm. Its function is as follows. Binds glycine-betaine. The sequence is that of Glycine-betaine-binding protein from Pseudomonas aeruginosa (strain ATCC 15692 / DSM 22644 / CIP 104116 / JCM 14847 / LMG 12228 / 1C / PRS 101 / PAO1).